We begin with the raw amino-acid sequence, 72 residues long: Translation initiation factor IF-1 (72 aa).

The S1-like domain maps to 1–72 (MSKEDVIEMQ…TRGRITWRAK (72 aa)).

Belongs to the IF-1 family. In terms of assembly, component of the 30S ribosomal translation pre-initiation complex which assembles on the 30S ribosome in the order IF-2 and IF-3, IF-1 and N-formylmethionyl-tRNA(fMet); mRNA recruitment can occur at any time during PIC assembly.

The protein localises to the cytoplasm. Functionally, one of the essential components for the initiation of protein synthesis. Stabilizes the binding of IF-2 and IF-3 on the 30S subunit to which N-formylmethionyl-tRNA(fMet) subsequently binds. Helps modulate mRNA selection, yielding the 30S pre-initiation complex (PIC). Upon addition of the 50S ribosomal subunit IF-1, IF-2 and IF-3 are released leaving the mature 70S translation initiation complex. The sequence is that of Translation initiation factor IF-1 from Clostridium acetobutylicum (strain ATCC 824 / DSM 792 / JCM 1419 / IAM 19013 / LMG 5710 / NBRC 13948 / NRRL B-527 / VKM B-1787 / 2291 / W).